A 112-amino-acid polypeptide reads, in one-letter code: MESRATAKFMRVSPRKARLVAQNVNGLPVEDAMNILKFTPNKPADIIFGVLRSALANAEQLPGIDVDAMVVKQIVINEGPTWKRFLPRAQGRATKIRKRTSHITVILAEGQE.

It belongs to the universal ribosomal protein uL22 family. As to quaternary structure, part of the 50S ribosomal subunit.

Its function is as follows. This protein binds specifically to 23S rRNA; its binding is stimulated by other ribosomal proteins, e.g. L4, L17, and L20. It is important during the early stages of 50S assembly. It makes multiple contacts with different domains of the 23S rRNA in the assembled 50S subunit and ribosome. The globular domain of the protein is located near the polypeptide exit tunnel on the outside of the subunit, while an extended beta-hairpin is found that lines the wall of the exit tunnel in the center of the 70S ribosome. This Nitratidesulfovibrio vulgaris (strain DSM 19637 / Miyazaki F) (Desulfovibrio vulgaris) protein is Large ribosomal subunit protein uL22.